Reading from the N-terminus, the 233-residue chain is Lipoprotein-releasing system ATP-binding protein LolD (233 aa).

Residues 6–233 enclose the ABC transporter domain; the sequence is LQCDNLCKRY…TAELSLMGAE (228 aa). 42-49 is a binding site for ATP; it reads GSSGSGKS.

The protein belongs to the ABC transporter superfamily. Lipoprotein translocase (TC 3.A.1.125) family. The complex is composed of two ATP-binding proteins (LolD) and two transmembrane proteins (LolC and LolE).

It localises to the cell inner membrane. Functionally, part of the ABC transporter complex LolCDE involved in the translocation of mature outer membrane-directed lipoproteins, from the inner membrane to the periplasmic chaperone, LolA. Responsible for the formation of the LolA-lipoprotein complex in an ATP-dependent manner. In Escherichia coli O6:K15:H31 (strain 536 / UPEC), this protein is Lipoprotein-releasing system ATP-binding protein LolD.